A 629-amino-acid polypeptide reads, in one-letter code: tRNA uridine 5-carboxymethylaminomethyl modification enzyme MnmG (629 aa).

FAD-binding positions include 13–18 (GGGHAG), Val125, and Ser180. 273 to 287 (GPRYCPSIEDKVMRF) contributes to the NAD(+) binding site. Residue Gln370 participates in FAD binding.

This sequence belongs to the MnmG family. Homodimer. Heterotetramer of two MnmE and two MnmG subunits. FAD serves as cofactor.

It localises to the cytoplasm. In terms of biological role, NAD-binding protein involved in the addition of a carboxymethylaminomethyl (cmnm) group at the wobble position (U34) of certain tRNAs, forming tRNA-cmnm(5)s(2)U34. The polypeptide is tRNA uridine 5-carboxymethylaminomethyl modification enzyme MnmG (Shigella dysenteriae serotype 1 (strain Sd197)).